Here is a 142-residue protein sequence, read N- to C-terminus: MAKKVQAYVKLQVAAGMANPSPPVGPALGQQGVNIMEFCKAFNAKTESLEKGLPTPVVITVYSDRSFTFVTKTPPAAVLLKKAAGIKSGSGKPNKDKVGKVSRAQVREIAETKAADMTGADIEAMTRSIEGTARSMGLVVED.

This sequence belongs to the universal ribosomal protein uL11 family. As to quaternary structure, part of the ribosomal stalk of the 50S ribosomal subunit. Interacts with L10 and the large rRNA to form the base of the stalk. L10 forms an elongated spine to which L12 dimers bind in a sequential fashion forming a multimeric L10(L12)X complex. One or more lysine residues are methylated.

Forms part of the ribosomal stalk which helps the ribosome interact with GTP-bound translation factors. The chain is Large ribosomal subunit protein uL11 from Erwinia tasmaniensis (strain DSM 17950 / CFBP 7177 / CIP 109463 / NCPPB 4357 / Et1/99).